A 434-amino-acid polypeptide reads, in one-letter code: Trigger factor (434 aa).

Residues 162-247 (GDKINISLIA…FNTVEQAKLP (86 aa)) enclose the PPIase FKBP-type domain.

The protein belongs to the FKBP-type PPIase family. Tig subfamily.

It localises to the cytoplasm. The catalysed reaction is [protein]-peptidylproline (omega=180) = [protein]-peptidylproline (omega=0). Functionally, involved in protein export. Acts as a chaperone by maintaining the newly synthesized protein in an open conformation. Functions as a peptidyl-prolyl cis-trans isomerase. This chain is Trigger factor, found in Methylobacillus flagellatus (strain ATCC 51484 / DSM 6875 / VKM B-1610 / KT).